Reading from the N-terminus, the 289-residue chain is ATP synthase subunit a (289 aa).

Helical transmembrane passes span 43–63 (AFHLDTLGWSVALGLIFLLIF), 104–124 (IAPLALTIFVWVFLMNAVDLI), 160–180 (FCVFALIIFYSIKVKGLGGFI), 193–213 (IFVQILLIPVNFLLEFVTLIA), 232–252 (VFILIAVMFGSGLLWLSGLGV), and 259–279 (AVFHILIITLQAFIFMMLTIV).

This sequence belongs to the ATPase A chain family. As to quaternary structure, F-type ATPases have 2 components, CF(1) - the catalytic core - and CF(0) - the membrane proton channel. CF(1) has five subunits: alpha(3), beta(3), gamma(1), delta(1), epsilon(1). CF(0) has three main subunits: a(1), b(2) and c(9-12). The alpha and beta chains form an alternating ring which encloses part of the gamma chain. CF(1) is attached to CF(0) by a central stalk formed by the gamma and epsilon chains, while a peripheral stalk is formed by the delta and b chains.

The protein localises to the cell inner membrane. In terms of biological role, key component of the proton channel; it plays a direct role in the translocation of protons across the membrane. In Pseudomonas putida (strain ATCC 47054 / DSM 6125 / CFBP 8728 / NCIMB 11950 / KT2440), this protein is ATP synthase subunit a.